A 355-amino-acid chain; its full sequence is Butyrate kinase 1 (355 aa).

The protein belongs to the acetokinase family.

The protein localises to the cytoplasm. The enzyme catalyses butanoate + ATP = butanoyl phosphate + ADP. It participates in lipid metabolism; butanoate metabolism. Functionally, catalyzes the conversion of butyryl-CoA through butyryl phosphate to butyrate. The protein is Butyrate kinase 1 (buk1) of Clostridium acetobutylicum (strain ATCC 824 / DSM 792 / JCM 1419 / IAM 19013 / LMG 5710 / NBRC 13948 / NRRL B-527 / VKM B-1787 / 2291 / W).